The primary structure comprises 287 residues: Spore wall protein 7 (287 aa).

A signal peptide spans 1–19; the sequence is MIKGLIYLFLFRCLEGRLA.

It belongs to the SWP7 family. As to quaternary structure, interacts with SWP9.

The protein resides in the cytoplasm. It is found in the spore wall. Its subcellular location is the spore polar tube. Involved in adherence of spores to the host cell surface and in infection efficiency. The chain is Spore wall protein 7 (SWP7) from Nosema bombycis (strain CQ1 / CVCC 102059) (Microsporidian parasite).